The sequence spans 1096 residues: Eukaryotic translation initiation factor 3 subunit A (1096 aa).

The PCI domain maps to 323-502 (QATRVLLATL…GSIHFGAADA (180 aa)). 3 coiled-coil regions span residues 591 to 643 (SERQ…IDRK), 677 to 761 (SVLR…RMQK), and 811 to 839 (KEGA…ERRA). Over residues 808–852 (ELPKEGAEERMASAREVAEQTRRDEQEKERRAVRESQRPSKREIV) the composition is skewed to basic and acidic residues. A disordered region spans residues 808-1096 (ELPKEGAEER…ADDDRNWRQK (289 aa)). A compositionally biased stretch (polar residues) spans 865–875 (AQPTQPRTISS). Composition is skewed to basic and acidic residues over residues 878–890 (FGER…RYRE), 933–942 (SNREQARGEA), and 955–973 (QRDR…KRGE). The segment covering 1008–1023 (DSSQRTSAATPTTQPW) has biased composition (polar residues). A compositionally biased stretch (basic and acidic residues) spans 1085–1096 (GAADDDRNWRQK).

It belongs to the eIF-3 subunit A family. Component of the eukaryotic translation initiation factor 3 (eIF-3) complex.

The protein resides in the cytoplasm. RNA-binding component of the eukaryotic translation initiation factor 3 (eIF-3) complex, which is involved in protein synthesis of a specialized repertoire of mRNAs and, together with other initiation factors, stimulates binding of mRNA and methionyl-tRNAi to the 40S ribosome. The eIF-3 complex specifically targets and initiates translation of a subset of mRNAs involved in cell proliferation. The chain is Eukaryotic translation initiation factor 3 subunit A from Brugia malayi (Filarial nematode worm).